Here is a 369-residue protein sequence, read N- to C-terminus: Ribosomal RNA large subunit methyltransferase G (369 aa).

It belongs to the methyltransferase superfamily. RlmG family.

Its subcellular location is the cytoplasm. The catalysed reaction is guanosine(1835) in 23S rRNA + S-adenosyl-L-methionine = N(2)-methylguanosine(1835) in 23S rRNA + S-adenosyl-L-homocysteine + H(+). Its function is as follows. Specifically methylates the guanine in position 1835 (m2G1835) of 23S rRNA. The polypeptide is Ribosomal RNA large subunit methyltransferase G (Magnetococcus marinus (strain ATCC BAA-1437 / JCM 17883 / MC-1)).